An 82-amino-acid chain; its full sequence is Sulfur carrier protein TusA (82 aa).

The Cysteine persulfide intermediate role is filled by Cys19.

The protein belongs to the sulfur carrier protein TusA family.

Its subcellular location is the cytoplasm. Functionally, sulfur carrier protein which probably makes part of a sulfur-relay system. The chain is Sulfur carrier protein TusA from Vibrio parahaemolyticus serotype O3:K6 (strain RIMD 2210633).